Reading from the N-terminus, the 760-residue chain is Prolyl endopeptidase (760 aa).

Residues Ser-609, Asp-693, and His-730 each act as charge relay system in the active site.

The protein belongs to the peptidase S9A family.

It is found in the cytoplasm. The catalysed reaction is Hydrolysis of Pro-|-Xaa &gt;&gt; Ala-|-Xaa in oligopeptides.. Inhibited by chymostatin, Boc-Glu(NHO-Bz)-Pyrrolidide, Z-Pro-L-prolinal dimethyacetal and the peptide H-H-L-P-P-P-V-OH. Functionally, cleaves peptide bonds on the C-terminal side of prolyl residues within peptides that are up to approximately 30 amino acids long. The protein is Prolyl endopeptidase (prep) of Dictyostelium discoideum (Social amoeba).